We begin with the raw amino-acid sequence, 234 residues long: Meiotically up-regulated gene 35 protein (234 aa).

Residues 126–156 (DSSGDLTSTDKERDVSPVSHSEKPYWDRYDL) show a composition bias toward basic and acidic residues. Positions 126–176 (DSSGDLTSTDKERDVSPVSHSEKPYWDRYDLDQPSNQDVEESRNLVQEPKH) are disordered. Phosphoserine occurs at positions 127 and 128. At threonine 132 the chain carries Phosphothreonine. Serine 141 is modified (phosphoserine).

Its subcellular location is the cytoplasm. Functionally, has a role in meiosis. This is Meiotically up-regulated gene 35 protein (mug35) from Schizosaccharomyces pombe (strain 972 / ATCC 24843) (Fission yeast).